The chain runs to 577 residues: Arginine--tRNA ligase (577 aa).

Residues 122-132 (PNVAKEMHVGH) carry the 'HIGH' region motif.

The protein belongs to the class-I aminoacyl-tRNA synthetase family. As to quaternary structure, monomer.

The protein localises to the cytoplasm. It catalyses the reaction tRNA(Arg) + L-arginine + ATP = L-arginyl-tRNA(Arg) + AMP + diphosphate. The sequence is that of Arginine--tRNA ligase from Vibrio parahaemolyticus serotype O3:K6 (strain RIMD 2210633).